The sequence spans 379 residues: Guanine nucleotide-binding protein G(s) subunit alpha (379 aa).

Positions 1–25 are disordered; it reads MGCLGNSKTEDQRNEEKVQRETNKK. The N-palmitoyl glycine moiety is linked to residue Gly2. The S-palmitoyl cysteine moiety is linked to residue Cys3. A compositionally biased stretch (basic and acidic residues) spans 8 to 25; that stretch reads KTEDQRNEEKVQRETNKK. Residues 39–379 enclose the G-alpha domain; the sequence is ATHRLLLLGA…RMHLRQYELL (341 aa). Residues 42–55 are G1 motif; that stretch reads RLLLLGAGESGKSS. GTP is bound by residues 47–55, 182–189, 208–212, 277–280, and Ala351; these read GAGESGKSS, LLRCRVLT, DVGGQ, and NKQD. Mg(2+) is bound by residues Ser54 and Thr189. Residues 181–189 are G2 motif; sequence DLLRCRVLT. The segment at 204–213 is G3 motif; the sequence is FHMFDVGGQR. Residues 273–280 are G4 motif; sequence ILFLNKQD. The tract at residues 349–354 is G5 motif; the sequence is TCAVDT.

It belongs to the G-alpha family. G(s) subfamily. Heterotrimeric G proteins are composed of 3 units; alpha, beta and gamma. The alpha chain contains the guanine nucleotide binding site.

The protein resides in the cell membrane. Guanine nucleotide-binding proteins (G proteins) function as transducers in numerous signaling pathways controlled by G protein-coupled receptors (GPCRs). Signaling involves the activation of adenylyl cyclases, resulting in increased levels of the signaling molecule cAMP. GNAS functions downstream of several GPCRs, including beta-adrenergic receptors. Stimulates the Ras signaling pathway. The chain is Guanine nucleotide-binding protein G(s) subunit alpha (gnas) from Xenopus laevis (African clawed frog).